A 629-amino-acid polypeptide reads, in one-letter code: tRNA uridine 5-carboxymethylaminomethyl modification enzyme MnmG (629 aa).

13–18 (GGGHAG) is an FAD binding site. Residue 273-287 (GPRYCPSIEDKIHRF) participates in NAD(+) binding.

It belongs to the MnmG family. As to quaternary structure, homodimer. Heterotetramer of two MnmE and two MnmG subunits. Requires FAD as cofactor.

The protein localises to the cytoplasm. NAD-binding protein involved in the addition of a carboxymethylaminomethyl (cmnm) group at the wobble position (U34) of certain tRNAs, forming tRNA-cmnm(5)s(2)U34. This is tRNA uridine 5-carboxymethylaminomethyl modification enzyme MnmG from Shewanella baltica (strain OS155 / ATCC BAA-1091).